A 341-amino-acid chain; its full sequence is Glucokinase (341 aa).

18 to 23 (GDIGGT) is a binding site for ATP.

The protein belongs to the bacterial glucokinase family.

It localises to the cytoplasm. The enzyme catalyses D-glucose + ATP = D-glucose 6-phosphate + ADP + H(+). The chain is Glucokinase from Mesorhizobium japonicum (strain LMG 29417 / CECT 9101 / MAFF 303099) (Mesorhizobium loti (strain MAFF 303099)).